The primary structure comprises 156 residues: Ribosome maturation factor RimP (156 aa).

The protein belongs to the RimP family.

The protein localises to the cytoplasm. Required for maturation of 30S ribosomal subunits. The polypeptide is Ribosome maturation factor RimP (Bacillus cereus (strain B4264)).